We begin with the raw amino-acid sequence, 360 residues long: Protein Wnt-2 (360 aa).

The N-terminal stretch at 1–25 is a signal peptide; it reads MNSPLRGIWLWLPLLLTWLTPEVSS. Disulfide bonds link Cys-76–Cys-87, Cys-127–Cys-135, Cys-137–Cys-157, Cys-206–Cys-220, Cys-208–Cys-215, Cys-278–Cys-309, Cys-294–Cys-304, Cys-308–Cys-348, Cys-324–Cys-339, Cys-326–Cys-336, and Cys-331–Cys-332. Ser-212 carries O-palmitoleoyl serine; by PORCN lipidation. Asn-295 is a glycosylation site (N-linked (GlcNAc...) asparagine).

Belongs to the Wnt family. Palmitoleoylation is required for efficient binding to frizzled receptors. Depalmitoleoylation leads to Wnt signaling pathway inhibition.

It localises to the secreted. The protein localises to the extracellular space. Its subcellular location is the extracellular matrix. In terms of biological role, ligand for members of the frizzled family of seven transmembrane receptors. Functions in the canonical Wnt signaling pathway that results in activation of transcription factors of the TCF/LEF family. Functions as a upstream regulator of FGF10 expression. Plays an important role in embryonic lung development. May contribute to embryonic brain development by regulating the proliferation of dopaminergic precursors and neurons. The protein is Protein Wnt-2 (WNT2) of Callithrix jacchus (White-tufted-ear marmoset).